Reading from the N-terminus, the 447-residue chain is Neuronal acetylcholine receptor subunit alpha-10 (447 aa).

An N-terminal signal peptide occupies residues 1–24; that stretch reads MGTRSHYLDLGFLLLLFLPAECLG. The Extracellular segment spans residues 25-237; that stretch reads AEGRLAHKLF…FTLLLRRRAA (213 aa). 2 N-linked (GlcNAc...) asparagine glycosylation sites follow: Asn40 and Asn56. Intrachain disulfides connect Cys154-Cys168 and Cys218-Cys219. 3 helical membrane-spanning segments follow: residues 238-258, 268-288, and 302-322; these read AYVC…PLAF, VSLG…LAES, and YMAT…IMNL. The Cytoplasmic segment spans residues 323 to 425; sequence HYCGPNAHPV…WKRLARVMDR (103 aa). The helical transmembrane segment at 426–446 threads the bilayer; the sequence is FFLGIFFCMALVMSLIVLVQA.

The protein belongs to the ligand-gated ion channel (TC 1.A.9) family. Acetylcholine receptor (TC 1.A.9.1) subfamily. Alpha-10/CHRNA10 sub-subfamily. In terms of assembly, forms homo- or heterooligomeric channels in conjunction with CHRNA10. The native outer hair cell receptor may be composed of CHRNA9:CHRNA10 heterooligomers. Found in the stoichiometric form (CHRNA9)2:(CHRNA10)3. As to expression, expressed in the outer hair cells of the cochlea and the neurons of dorsal root ganglia.

The protein resides in the synaptic cell membrane. It is found in the cell membrane. The enzyme catalyses Ca(2+)(in) = Ca(2+)(out). It carries out the reaction Mg(2+)(in) = Mg(2+)(out). It catalyses the reaction K(+)(in) = K(+)(out). The catalysed reaction is Na(+)(in) = Na(+)(out). Its activity is regulated as follows. Activated by a myriad of ligands such as acetylcholine. AChR activity is inhibited by the antagonist alpha-conotoxins RgIA and GeXXA, small disulfide-constrained peptides from cone snails. Functionally, component of neuronal acetylcholine receptors (nAChRs) that function as pentameric, ligand-gated cation channels with high calcium permeability among other activities. nAChRs are excitatory neurotrasnmitter receptors formed by a collection of nAChR subunits known to mediate synaptic transmission in the nervous system and the neuromuscular junction. Each nAchR subunit confers differential attributes to channel properties, including activation, deactivation and desensitization kinetics, pH sensitivity, cation permeability, and binding to allosteric modulators. Forms heteropentamers with CHRNA9. Expressed in the inner ear, in sympathetic neurons and in other non-neuronal cells, such as skin keratinocytes and lymphocytes. nAChR formed by CHRNA9:CHRNA10 mediate central nervous system control of auditory and vestibular sensory processing. The channel is permeable to a range of divalent cations including calcium, the influx of which may activate a potassium current which hyperpolarizes the cell membrane. In the ear, mediates synaptic transmission between efferent olivocochlear fibers and hair cells of the cochlea, this may lead to a reduction in basilar membrane motion, altering the activity of auditory nerve fibers and reducing the range of dynamic hearing. This may protect against acoustic trauma. May also regulate keratinocyte adhesion. The protein is Neuronal acetylcholine receptor subunit alpha-10 (Chrna10) of Rattus norvegicus (Rat).